Here is a 146-residue protein sequence, read N- to C-terminus: uncharacterized protein (146 aa).

Disordered stretches follow at residues 1 to 33 and 50 to 70; these read MATFHRAHATSSVKPRARRHQEPNSGDWPGSYR and QHWRPRSLGAGQGREDPSWEG.

This is an uncharacterized protein from Homo sapiens (Human).